The chain runs to 229 residues: Elongation factor 1-delta 1 (229 aa).

Residues 80-109 (ESTAVPSASTPDVADAKAPAADDDDDDDVD) are disordered. Acidic residues predominate over residues 100–109 (ADDDDDDDVD).

It belongs to the EF-1-beta/EF-1-delta family. EF-1 is composed of 4 subunits: alpha, beta (1B-alpha=beta'), delta (1B-beta), and gamma (1B-gamma).

Functionally, EF-1-beta and EF-1-beta' stimulate the exchange of GDP bound to EF-1-alpha to GTP. This is Elongation factor 1-delta 1 from Oryza sativa subsp. japonica (Rice).